A 224-amino-acid chain; its full sequence is Large ribosomal subunit protein uL11c (224 aa).

A chloroplast-targeting transit peptide spans 1–66 (MAQPLVAAPS…SHRRLSIVAM (66 aa)). K75 and K111 each carry N6,N6,N6-trimethyllysine.

As to quaternary structure, component of the chloroplast large ribosomal subunit (LSU). Mature 70S chloroplast ribosomes of higher plants consist of a small (30S) and a large (50S) subunit. The 30S small subunit contains 1 molecule of ribosomal RNA (16S rRNA) and 24 different proteins. The 50S large subunit contains 3 rRNA molecules (23S, 5S and 4.5S rRNA) and 33 different proteins.

The protein resides in the plastid. It is found in the chloroplast. Component of the chloroplast ribosome (chloro-ribosome), a dedicated translation machinery responsible for the synthesis of chloroplast genome-encoded proteins, including proteins of the transcription and translation machinery and components of the photosynthetic apparatus. This Spinacia oleracea (Spinach) protein is Large ribosomal subunit protein uL11c (rpl11).